The primary structure comprises 101 residues: MGTRYLLVLLLVLLVLGFEVQGAHESQQDETTSSALLTQMQESLYSYWGTARSAAEDLYKKAYPTTMDEKIRDIYSKSTAAVSTYAGIFTDQLLSMLKGDS.

A signal peptide spans 1 to 22 (MGTRYLLVLLLVLLVLGFEVQG). Residues 66 to 74 (TMDEKIRDI) form a lipid binding region. The tract at residues 78-101 (STAAVSTYAGIFTDQLLSMLKGDS) is lipoprotein lipase cofactor.

This sequence belongs to the apolipoprotein C2 family. Proapolipoprotein C-II is synthesized as a sialic acid containing glycoprotein which is subsequently desialylated prior to its proteolytic processing. In terms of processing, proapolipoprotein C-II, the major form found in plasma undergoes proteolytic cleavage of its N-terminal hexapeptide to generate apolipoprotein C-II, which occurs as the minor form in plasma. Highly expressed in the liver. Moderately expressed in the ileum, jejunum and ovary.

It localises to the secreted. Functionally, component of chylomicrons, very low-density lipoproteins (VLDL), low-density lipoproteins (LDL), and high-density lipoproteins (HDL) in plasma. Plays an important role in lipoprotein metabolism as an activator of lipoprotein lipase. Both proapolipoprotein C-II and apolipoprotein C-II can activate lipoprotein lipase. The polypeptide is Apolipoprotein C-II (APOC2) (Canis lupus familiaris (Dog)).